Here is a 300-residue protein sequence, read N- to C-terminus: Putative hydrolase ML2424 (300 aa).

Catalysis depends on Asp56, which acts as the Nucleophile. Residues Asp56, Asp58, and Asp231 each coordinate Mg(2+). Residue Asp58 is the Proton donor of the active site.

This sequence belongs to the HAD-like hydrolase superfamily. SerB family. The cofactor is Mg(2+).

The polypeptide is Putative hydrolase ML2424 (Mycobacterium leprae (strain TN)).